Consider the following 124-residue polypeptide: Small ribosomal subunit protein uS12 (124 aa).

Asp-89 is modified (3-methylthioaspartic acid). Residues 104–124 (TAGVKDRRQSRSKYGAKAPKE) form a disordered region.

Belongs to the universal ribosomal protein uS12 family. As to quaternary structure, part of the 30S ribosomal subunit. Contacts proteins S8 and S17. May interact with IF1 in the 30S initiation complex.

Its function is as follows. With S4 and S5 plays an important role in translational accuracy. Interacts with and stabilizes bases of the 16S rRNA that are involved in tRNA selection in the A site and with the mRNA backbone. Located at the interface of the 30S and 50S subunits, it traverses the body of the 30S subunit contacting proteins on the other side and probably holding the rRNA structure together. The combined cluster of proteins S8, S12 and S17 appears to hold together the shoulder and platform of the 30S subunit. The polypeptide is Small ribosomal subunit protein uS12 (Synechococcus sp. (strain CC9605)).